The primary structure comprises 259 residues: Flagellar brake protein YcgR (259 aa).

One can recognise a PilZ domain in the interval 129–246; the sequence is QRREFYRLQT…DNAIQRYIFK (118 aa).

The protein belongs to the YcgR family. Monomer. Interacts with the flagellar basal bodies.

The protein resides in the bacterial flagellum basal body. Acts as a flagellar brake, regulating swimming and swarming in a bis-(3'-5') cyclic diguanylic acid (c-di-GMP)-dependent manner. Binds 1 c-di-GMP dimer per subunit. Increasing levels of c-di-GMP lead to decreased motility. This is Flagellar brake protein YcgR from Azoarcus sp. (strain BH72).